Reading from the N-terminus, the 142-residue chain is Putative pre-16S rRNA nuclease (142 aa).

The protein belongs to the YqgF nuclease family.

It localises to the cytoplasm. In terms of biological role, could be a nuclease involved in processing of the 5'-end of pre-16S rRNA. In Lawsonia intracellularis (strain PHE/MN1-00), this protein is Putative pre-16S rRNA nuclease.